The primary structure comprises 435 residues: Enolase (435 aa).

Gln163 contacts (2R)-2-phosphoglycerate. Residue Glu205 is the Proton donor of the active site. 3 residues coordinate Mg(2+): Asp243, Glu292, and Asp319. (2R)-2-phosphoglycerate contacts are provided by Lys344, Arg373, Ser374, and Lys395. Catalysis depends on Lys344, which acts as the Proton acceptor.

This sequence belongs to the enolase family. In terms of assembly, homooctamer, a tetramer of homodimers. Mg(2+) is required as a cofactor.

It is found in the cytoplasm. The protein localises to the secreted. The protein resides in the cell surface. It localises to the cell wall. The enzyme catalyses (2R)-2-phosphoglycerate = phosphoenolpyruvate + H2O. The protein operates within carbohydrate degradation; glycolysis; pyruvate from D-glyceraldehyde 3-phosphate: step 4/5. In terms of biological role, catalyzes the reversible conversion of 2-phosphoglycerate (2-PG) into phosphoenolpyruvate (PEP). It is essential for the degradation of carbohydrates via glycolysis. 'Moonlights' as a plasminogen receptor. Binds plasminogen and more weakly plasmin when expressed on the bacterial cell surface; probably has more than one plasmin(ogen) binding site, may bind via Lys residues. Plasminogen binding potentially allows the bacterium to acquire surface-associated proteolytic activity, which in turn contributes to tissue invasion and virulence. This chain is Enolase, found in Streptococcus pyogenes serotype M6 (strain ATCC BAA-946 / MGAS10394).